The primary structure comprises 536 residues: Arylsulfatase K (536 aa).

A signal peptide spans 1 to 22 (MLLLWVSVVAALALAVLAPGAG). Residues Asp-40 and Cys-80 each contribute to the Ca(2+) site. The active-site Nucleophile is Cys-80. Cys-80 is modified (3-oxoalanine (Cys)). A glycan (N-linked (GlcNAc...) asparagine) is linked at Asn-108. Lys-128 contacts substrate. N-linked (GlcNAc...) asparagine glycans are attached at residues Asn-166 and Asn-193. Substrate is bound at residue His-251. Asn-262 carries N-linked (GlcNAc...) asparagine glycosylation. Positions 313 and 314 each coordinate Ca(2+). Asn-375, Asn-413, and Asn-498 each carry an N-linked (GlcNAc...) asparagine glycan.

This sequence belongs to the sulfatase family. Ca(2+) is required as a cofactor. In terms of processing, the conversion to 3-oxoalanine (also known as C-formylglycine, FGly), of a serine or cysteine residue in prokaryotes and of a cysteine residue in eukaryotes, is critical for catalytic activity. Post-translationally, the 75-kDa precursor undergoes proteolytic processing to yield a 23 kDa form. N-glycosylated with both high mannose and complex type sugars. As to expression, expressed at high levels in the placenta and pancreas. Expressed at intermediate levels in the lung, brain, heart, liver and kidney and at low levels in the muscle.

The protein localises to the secreted. It is found in the lysosome. It carries out the reaction an aryl sulfate + H2O = a phenol + sulfate + H(+). It catalyses the reaction Hydrolysis of the 2-sulfate groups of the 2-O-sulfo-D-glucuronate residues of chondroitin sulfate, heparin and heparitin sulfate.. Its function is as follows. Catalyzes the hydrolysis of pseudosubstrates such as p-nitrocatechol sulfate and p-nitrophenyl sulfate. Catalyzes the hydrolysis of the 2-sulfate groups of the 2-O-sulfo-D-glucuronate residues of chondroitin sulfate, heparin and heparitin sulfate. Acts selectively on 2-sulfoglucuronate and lacks activity against 2-sulfoiduronate. This chain is Arylsulfatase K (ARSK), found in Homo sapiens (Human).